Reading from the N-terminus, the 427-residue chain is Glutamate-1-semialdehyde 2,1-aminomutase (427 aa).

Position 265 is an N6-(pyridoxal phosphate)lysine (Lys-265).

It belongs to the class-III pyridoxal-phosphate-dependent aminotransferase family. HemL subfamily. In terms of assembly, homodimer. Pyridoxal 5'-phosphate is required as a cofactor.

It localises to the cytoplasm. It catalyses the reaction (S)-4-amino-5-oxopentanoate = 5-aminolevulinate. The protein operates within porphyrin-containing compound metabolism; protoporphyrin-IX biosynthesis; 5-aminolevulinate from L-glutamyl-tRNA(Glu): step 2/2. The chain is Glutamate-1-semialdehyde 2,1-aminomutase from Pseudomonas fluorescens (strain Pf0-1).